A 329-amino-acid polypeptide reads, in one-letter code: Transmembrane protein I329L (329 aa).

Residues 1 to 31 (MLRVFIFFVFLGSGLAGRIKPQITCKYFISE) form the signal peptide. N-linked (GlcNAc...) asparagine; by host glycosylation is found at Asn-32, Asn-39, Asn-44, Asn-76, Asn-82, and Asn-101. Residues 32–239 (NNTWYKYNVT…NTERYKNCYP (208 aa)) are Extracellular-facing. Residues 112–133 (ELKFLDLRYNNLQFIDYNILRK) form an LRR repeat. 2 N-linked (GlcNAc...) asparagine; by host glycosylation sites follow: Asn-185 and Asn-219. The cysteines at positions 195 and 237 are disulfide-linked. The helical transmembrane segment at 240–260 (FVLVSILCSCISFLFLIICLL) threads the bilayer. Topologically, residues 261-329 (RSICKKYSCT…EKKASCSRRK (69 aa)) are cytoplasmic.

This sequence belongs to the asfivirus I329L family. Post-translationally, highly glycosylated.

The protein resides in the host endoplasmic reticulum membrane. Its subcellular location is the host Golgi apparatus membrane. Functionally, viral TLR3 homolog that probably prevents TLR3 dimerization and subsequent induction of IFN. Inhibits dsRNA-stimulated activation of NF-kB and IRF3. This is Transmembrane protein I329L from Ornithodoros (relapsing fever ticks).